The chain runs to 182 residues: Ribosome-recycling factor (182 aa).

The protein belongs to the RRF family.

The protein localises to the cytoplasm. Responsible for the release of ribosomes from messenger RNA at the termination of protein biosynthesis. May increase the efficiency of translation by recycling ribosomes from one round of translation to another. The polypeptide is Ribosome-recycling factor (Synechococcus sp. (strain CC9605)).